The sequence spans 661 residues: Putative lipase ATG15 (661 aa).

At Met-1 to Trp-3 the chain is on the cytoplasmic side. Residues Asn-4 to Ala-24 traverse the membrane as a helical; Signal-anchor for type II membrane protein segment. Over Ala-25–Leu-661 the chain is Lumenal. N-linked (GlcNAc...) asparagine glycosylation is found at Asn-155, Asn-190, Asn-212, Asn-271, and Asn-295. The Charge relay system role is filled by Ser-311. An N-linked (GlcNAc...) asparagine glycan is attached at Asn-457. 2 disordered regions span residues Glu-492 to Ser-559 and Thr-574 to Ser-597. Composition is skewed to low complexity over residues Ser-493–Thr-513, Thr-527–Ser-559, and Thr-574–Thr-595.

It belongs to the AB hydrolase superfamily. Lipase family. As to quaternary structure, binds to both phosphatidylinositol (PI) and phosphatidylinositol 3,5-bisphosphate (PIP2).

It is found in the endosome. The protein resides in the multivesicular body membrane. It localises to the prevacuolar compartment membrane. It catalyses the reaction a triacylglycerol + H2O = a diacylglycerol + a fatty acid + H(+). In terms of biological role, lipase which is essential for lysis of subvacuolar cytoplasm to vacuole targeted bodies and intravacuolar autophagic bodies. Involved in the lysis of intravacuolar multivesicular body (MVB) vesicles. The intravacuolar membrane disintegration by ATG15 is critical to life span extension. This chain is Putative lipase ATG15 (ATG15), found in Passalora fulva (Tomato leaf mold).